The primary structure comprises 107 residues: MEHGEILARLEATIAERRLGDPSASYVAKLNAKGLAKIAQKVGEEGTETVIAALAGDRKELVGEAADLIFHLMVLLSAKDVPFAEVLAELARREGTSGIAEKASRSN.

Belongs to the PRA-PH family.

The protein localises to the cytoplasm. The enzyme catalyses 1-(5-phospho-beta-D-ribosyl)-ATP + H2O = 1-(5-phospho-beta-D-ribosyl)-5'-AMP + diphosphate + H(+). It participates in amino-acid biosynthesis; L-histidine biosynthesis; L-histidine from 5-phospho-alpha-D-ribose 1-diphosphate: step 2/9. This Novosphingobium aromaticivorans (strain ATCC 700278 / DSM 12444 / CCUG 56034 / CIP 105152 / NBRC 16084 / F199) protein is Phosphoribosyl-ATP pyrophosphatase.